Reading from the N-terminus, the 78-residue chain is Gas vesicle protein A (78 aa).

Residues 9-19 (LAEVLDRVLDK) form an alpha helix 1 region. The segment at 23-31 (VDVWARISL) is beta-strand 1. The beta turn stretch occupies residues 32–34 (VGI). The interval 35–43 (EILTVEARV) is beta-strand 2. Positions 48–67 (VDTFLHYAEEIAKIEQAELT) are alpha helix 2.

The protein belongs to the gas vesicle GvpA family. In terms of assembly, the gas vesicle shell is 2 nm thick and consists of a single layer of this protein. It forms helical ribs nearly perpendicular to the long axis of the vesicle. Modeled as antiparallel homodimers.

It is found in the gas vesicle shell. Gas vesicles are hollow, gas filled proteinaceous nanostructures found in some microorganisms. During planktonic growth they allow positioning of the organism at a favorable depth for light or nutrient acquisition. GvpA forms the protein shell. This gene replaces p-gvpA of H.salinarum very poorly, only about 1% of GVs are formed; the few gas vesicles formed are quite strong with a very high critical collapse pressure (CCP) of 0.213 MPa. Functionally, expression of a 9.5 kb mc-vac DNA fragment containing 2 divergently transcribed regions (gvpD-gvpE-gvpF-gvpG-gvpH-gvpI-gvpJ-gvpK-gvpL-gvpM and gvpA-gvpC-gvpN-gvpO) allows H.volcanii to produce gas vesicles. In Haloferax mediterranei (strain ATCC 33500 / DSM 1411 / JCM 8866 / NBRC 14739 / NCIMB 2177 / R-4) (Halobacterium mediterranei), this protein is Gas vesicle protein A.